The chain runs to 270 residues: Ribosomal RNA small subunit methyltransferase A (270 aa).

Residues asparagine 16, leucine 18, glycine 43, glutamate 64, aspartate 89, and asparagine 110 each coordinate S-adenosyl-L-methionine.

This sequence belongs to the class I-like SAM-binding methyltransferase superfamily. rRNA adenine N(6)-methyltransferase family. RsmA subfamily.

Its subcellular location is the cytoplasm. It catalyses the reaction adenosine(1518)/adenosine(1519) in 16S rRNA + 4 S-adenosyl-L-methionine = N(6)-dimethyladenosine(1518)/N(6)-dimethyladenosine(1519) in 16S rRNA + 4 S-adenosyl-L-homocysteine + 4 H(+). Functionally, specifically dimethylates two adjacent adenosines (A1518 and A1519) in the loop of a conserved hairpin near the 3'-end of 16S rRNA in the 30S particle. May play a critical role in biogenesis of 30S subunits. The protein is Ribosomal RNA small subunit methyltransferase A of Pseudomonas fluorescens (strain ATCC BAA-477 / NRRL B-23932 / Pf-5).